A 248-amino-acid polypeptide reads, in one-letter code: uncharacterized protein (248 aa).

8 to 32 (IVTGAAQGIGQAYAQALAREGASVV) is an NADP(+) binding site. Ser143 contributes to the substrate binding site. Tyr153 serves as the catalytic Proton acceptor.

This sequence belongs to the short-chain dehydrogenases/reductases (SDR) family.

This is an uncharacterized protein from Mycobacterium tuberculosis (strain CDC 1551 / Oshkosh).